A 114-amino-acid chain; its full sequence is Kininogen-2 (114 aa).

An N-terminal signal peptide occupies residues 1–23 (MRLWFCLSFFIVLCLEHFPGTLA). A compositionally biased stretch (basic residues) spans 35–45 (TRLHGHHKPSR). The tract at residues 35 to 114 (TRLHGHHKPS…QIPGLGPLRG (80 aa)) is disordered. A compositionally biased stretch (basic and acidic residues) spans 65 to 80 (PESEEKTEQFLRDLPK). Arginine 113 carries the post-translational modification Arginine amide.

This sequence belongs to the bradykinin-related peptide family. Expressed by the skin glands.

The protein localises to the secreted. Functionally, potent vasodilator. Binds B1 (BDKRB1) and B2 (BDKRB2) bradykinin receptors. The polypeptide is Kininogen-2 (Bombina maxima (Giant fire-bellied toad)).